A 363-amino-acid chain; its full sequence is Probable protein phosphatase 2C member 13, mitochondrial (363 aa).

The N-terminal 59 residues, M1–A59, are a transit peptide targeting the mitochondrion. Positions K111–F357 constitute a PPM-type phosphatase domain. Residues D147, G148, D309, and D348 each coordinate Mn(2+).

The protein belongs to the PP2C family. It depends on Mg(2+) as a cofactor. Mn(2+) is required as a cofactor. Highly expressed in mature pollen grains.

The protein resides in the mitochondrion. It carries out the reaction O-phospho-L-seryl-[protein] + H2O = L-seryl-[protein] + phosphate. The catalysed reaction is O-phospho-L-threonyl-[protein] + H2O = L-threonyl-[protein] + phosphate. In terms of biological role, probable protein phosphatase that may play a role as a mitochondrial signal transduction mediator in pollen germination. May function in retrograde signaling from the mitochondria to the nucleus. May be a downstream factor of cytoplasmic male sterility (CMS). CMS is caused by genetic incompatibility between nuclei and mitochondria within male reproductive organs. The chain is Probable protein phosphatase 2C member 13, mitochondrial from Oryza sativa subsp. japonica (Rice).